The following is an 872-amino-acid chain: Alanine--tRNA ligase (872 aa).

Positions 567, 571, 669, and 673 each coordinate Zn(2+).

Belongs to the class-II aminoacyl-tRNA synthetase family. It depends on Zn(2+) as a cofactor.

Its subcellular location is the cytoplasm. The catalysed reaction is tRNA(Ala) + L-alanine + ATP = L-alanyl-tRNA(Ala) + AMP + diphosphate. In terms of biological role, catalyzes the attachment of alanine to tRNA(Ala) in a two-step reaction: alanine is first activated by ATP to form Ala-AMP and then transferred to the acceptor end of tRNA(Ala). Also edits incorrectly charged Ser-tRNA(Ala) and Gly-tRNA(Ala) via its editing domain. The sequence is that of Alanine--tRNA ligase from Streptococcus pyogenes serotype M18 (strain MGAS8232).